The primary structure comprises 330 residues: Probable L-lactate dehydrogenase (330 aa).

3 residues coordinate substrate: Arg105, Asn137, and Arg168. Asn137 provides a ligand contact to NAD(+). Residue His192 is the Proton acceptor of the active site.

This sequence belongs to the LDH/MDH superfamily. LDH family. In terms of assembly, homotetramer.

The protein resides in the cytoplasm. The catalysed reaction is (S)-lactate + NAD(+) = pyruvate + NADH + H(+). It participates in fermentation; pyruvate fermentation to lactate; (S)-lactate from pyruvate: step 1/1. The chain is Probable L-lactate dehydrogenase from Schizosaccharomyces pombe (strain 972 / ATCC 24843) (Fission yeast).